We begin with the raw amino-acid sequence, 140 residues long: Transmembrane protein 107 (140 aa).

A run of 2 helical transmembrane segments spans residues 7-27 (LVPSRFLTLLAHLVVVITLFW) and 53-73 (LVAALCLTLGLFAVELAGFLS). Residue N79 is glycosylated (N-linked (GlcNAc...) asparagine). Helical transmembrane passes span 83 to 103 (SLLSIAAHCSASVALSFFVFE) and 113 to 133 (IFTFCSAFPAVTETALFIAVF).

As to quaternary structure, part of the tectonic-like complex (also named B9 complex). Interacts with TMEM237, TMEM231, MKS1 and TMEM216.

It localises to the membrane. It is found in the cell projection. The protein localises to the cilium. Functionally, plays a role in cilia formation and embryonic patterning. Requires for normal Sonic hedgehog (Shh) signaling in the neural tube and acts in combination with GLI2 and GLI3 to pattern ventral and intermediate neuronal cell types. During ciliogenesis regulates the ciliary transition zone localization of some MKS complex proteins. The sequence is that of Transmembrane protein 107 from Mus musculus (Mouse).